The sequence spans 381 residues: Guanine nucleotide-binding protein G(olf) subunit alpha (381 aa).

The disordered stretch occupies residues 1 to 25 (MGCLGGNSKTTEDQGVDEKERREAN). The N-palmitoyl glycine moiety is linked to residue Gly-2. Cys-3 carries the S-palmitoyl cysteine lipid modification. Basic and acidic residues predominate over residues 10 to 25 (TTEDQGVDEKERREAN). Residues 41 to 381 (ATHRLLLLGA…RMHLKQYELL (341 aa)) enclose the G-alpha domain. The G1 motif stretch occupies residues 44–57 (RLLLLGAGESGKST). Residues Glu-52, Ser-53, Gly-54, Lys-55, Ser-56, and Thr-57 each contribute to the GTP site. Position 56 (Ser-56) interacts with Mg(2+). Phosphothreonine is present on Thr-178. Positions 183–191 (DLLRCRVLT) are G2 motif. Positions 185 and 186 each coordinate GTP. Arg-188 is subject to ADP-ribosylarginine; by cholera toxin. Thr-191 contributes to the GTP binding site. The Mg(2+) site is built by Thr-191 and Asp-210. A G3 motif region spans residues 206-215 (FHMFDVGGQR). GTP contacts are provided by Gly-213, Asn-279, Lys-280, Asp-282, and Ala-353. The G4 motif stretch occupies residues 275–282 (ILFLNKQD). The segment at 351-356 (TCAVDT) is G5 motif.

This sequence belongs to the G-alpha family. G(s) subfamily. As to quaternary structure, g proteins are composed of 3 units; alpha, beta and gamma. The alpha chain contains the guanine nucleotide binding site. Interacts with GAS2L2. Interacts (GDP-bound form) with RIC8B (via C-terminus); promoting GNAL folding and association with the plasma membrane. In terms of tissue distribution, detected in olfactory neuroepithelium, brain, testis, and to a lower extent in retina, lung alveoli, spleen. Trace amounts where seen in kidney, adrenal gland and liver. Found to be expressed in all the insulinomas examined.

It is found in the cell membrane. It carries out the reaction GTP + H2O = GDP + phosphate + H(+). Guanine nucleotide-binding protein (G protein) involved as transducer in olfactory signal transduction controlled by G protein-coupled receptors (GPCRs). Contains the guanine nucleotide binding site and alternates between an active, GTP-bound state and an inactive, GDP-bound state. Signaling by an activated GPCR promotes GDP release and GTP binding. The alpha subunit has a low GTPase activity that converts bound GTP to GDP, thereby terminating the signal. Both GDP release and GTP hydrolysis are modulated by numerous regulatory proteins. GNAL/G(olf) alpha specifically mediates olfactory signal transduction within the olfactory neuroepithelium and the basal ganglia following GPCRs activation. Acts by promoting the specific activation of adenylyl cyclase ADCY3, resulting in increased levels of the signaling molecule cAMP. This is Guanine nucleotide-binding protein G(olf) subunit alpha from Homo sapiens (Human).